We begin with the raw amino-acid sequence, 2145 residues long: Adenylate cyclase (2145 aa).

4 disordered regions span residues 1–115 (MPRN…RMSD), 127–236 (DPAG…SGAR), 266–307 (GKEH…PVPK), and 329–547 (VRDI…GPTD). Composition is skewed to low complexity over residues 7–23 (SSRF…SARS), 35–68 (PSAS…APSR), and 89–107 (SPTS…SSNS). Polar residues-rich tracts occupy residues 134 to 148 (SRTQ…SLSQ) and 159 to 205 (PASS…TESP). Positions 217–234 (SIASITTTASSQGSRASG) are enriched in low complexity. A compositionally biased stretch (basic residues) spans 269–281 (HRSHSYSHARPHR). Residues 343–357 (NDSSQQNNPPKTSGS) are compositionally biased toward polar residues. A compositionally biased stretch (basic and acidic residues) spans 377 to 403 (KSNEDPRSLRPTVSREDSTISVPKDRN). A compositionally biased stretch (polar residues) spans 404–441 (GSSTMYGTRSRAQSPAPSTTGSYWGHKSGSTDGQTSPG). Composition is skewed to basic and acidic residues over residues 454–466 (RLKE…DLKK) and 495–511 (ADGK…RPDL). A Ras-associating domain is found at 637–727 (HNYCIRVFRA…IEDIGREDNS (91 aa)). 15 LRR repeats span residues 779-800 (EIIS…FISV), 803-824 (NLRD…FGYA), 826-847 (RLTM…ALHN), 850-871 (GLLK…FEAF), 873-894 (VLRT…LAKL), 896-917 (NLVD…VGQM), 919-941 (SLER…FKNL), 943-964 (SLRE…SQLP), 965-986 (KLEI…FERV), 987-1006 (RSIK…APVP), 1007-1028 (TLKA…FHNM), 1030-1051 (NLER…IGNL), 1053-1074 (RLEY…IGCL), 1076-1097 (ELKR…LWWA), and 1099-1120 (KLDY…ASRA). The disordered stretch occupies residues 1114–1226 (PKPASRAPHP…SSRKDSSHTQ (113 aa)). Low complexity-rich tracts occupy residues 1160 to 1179 (RPSQ…VPGG) and 1201 to 1217 (SRST…PTAS). LRR repeat units follow at residues 1235 to 1255 (SLRY…DQLC), 1259 to 1280 (NLRV…SIKS), 1283 to 1304 (QLVE…DLEE), 1307 to 1328 (MLQT…ISRA), 1330 to 1352 (KLTV…PYDW), and 1359 to 1380 (NLRY…SVPT). The PPM-type phosphatase domain occupies 1432–1709 (PYGMADTLGS…NKMTVQMLGV (278 aa)). The tract at residues 1718–1760 (RSRQHKGQSMPVYASLQDDGGSSTGMRRARKARDGPLDSTLGR) is disordered. The 138-residue stretch at 1773–1910 (AIVFTDIKNS…PMVNKASRIS (138 aa)) folds into the Guanylate cyclase domain. Mg(2+) is bound by residues aspartate 1778 and aspartate 1821.

This sequence belongs to the adenylyl cyclase class-3 family. It depends on Mg(2+) as a cofactor.

It catalyses the reaction ATP = 3',5'-cyclic AMP + diphosphate. In terms of biological role, plays essential roles in regulation of cellular metabolism by catalyzing the synthesis of a second messenger, cAMP. The protein is Adenylate cyclase of Podospora anserina (Pleurage anserina).